The following is a 392-amino-acid chain: ATP phosphoribosyltransferase regulatory subunit (392 aa).

The protein belongs to the class-II aminoacyl-tRNA synthetase family. HisZ subfamily. In terms of assembly, heteromultimer composed of HisG and HisZ subunits.

The protein localises to the cytoplasm. The protein operates within amino-acid biosynthesis; L-histidine biosynthesis; L-histidine from 5-phospho-alpha-D-ribose 1-diphosphate: step 1/9. In terms of biological role, required for the first step of histidine biosynthesis. May allow the feedback regulation of ATP phosphoribosyltransferase activity by histidine. This is ATP phosphoribosyltransferase regulatory subunit from Synechococcus sp. (strain CC9902).